We begin with the raw amino-acid sequence, 765 residues long: Phosphoribosylformylglycinamidine synthase subunit PurL (765 aa).

Histidine 59 is an active-site residue. Residues tyrosine 62 and lysine 104 each coordinate ATP. Residue glutamate 106 coordinates Mg(2+). Residues 107 to 110 (SHNH) and arginine 129 each bind substrate. The active-site Proton acceptor is histidine 108. Aspartate 130 lines the Mg(2+) pocket. Substrate is bound at residue glutamine 254. Aspartate 282 is a Mg(2+) binding site. A substrate-binding site is contributed by 326–328 (ESQ). ATP contacts are provided by asparagine 522 and glycine 559. Asparagine 560 provides a ligand contact to Mg(2+). A substrate-binding site is contributed by serine 562.

The protein belongs to the FGAMS family. As to quaternary structure, monomer. Part of the FGAM synthase complex composed of 1 PurL, 1 PurQ and 2 PurS subunits.

The protein localises to the cytoplasm. The catalysed reaction is N(2)-formyl-N(1)-(5-phospho-beta-D-ribosyl)glycinamide + L-glutamine + ATP + H2O = 2-formamido-N(1)-(5-O-phospho-beta-D-ribosyl)acetamidine + L-glutamate + ADP + phosphate + H(+). It functions in the pathway purine metabolism; IMP biosynthesis via de novo pathway; 5-amino-1-(5-phospho-D-ribosyl)imidazole from N(2)-formyl-N(1)-(5-phospho-D-ribosyl)glycinamide: step 1/2. Its function is as follows. Part of the phosphoribosylformylglycinamidine synthase complex involved in the purines biosynthetic pathway. Catalyzes the ATP-dependent conversion of formylglycinamide ribonucleotide (FGAR) and glutamine to yield formylglycinamidine ribonucleotide (FGAM) and glutamate. The FGAM synthase complex is composed of three subunits. PurQ produces an ammonia molecule by converting glutamine to glutamate. PurL transfers the ammonia molecule to FGAR to form FGAM in an ATP-dependent manner. PurS interacts with PurQ and PurL and is thought to assist in the transfer of the ammonia molecule from PurQ to PurL. This is Phosphoribosylformylglycinamidine synthase subunit PurL from Thermobifida fusca (strain YX).